The sequence spans 239 residues: 1-(5-phosphoribosyl)-5-[(5-phosphoribosylamino)methylideneamino] imidazole-4-carboxamide isomerase (239 aa).

Catalysis depends on aspartate 8, which acts as the Proton acceptor. The Proton donor role is filled by aspartate 129.

This sequence belongs to the HisA/HisF family.

The protein localises to the cytoplasm. It carries out the reaction 1-(5-phospho-beta-D-ribosyl)-5-[(5-phospho-beta-D-ribosylamino)methylideneamino]imidazole-4-carboxamide = 5-[(5-phospho-1-deoxy-D-ribulos-1-ylimino)methylamino]-1-(5-phospho-beta-D-ribosyl)imidazole-4-carboxamide. Its pathway is amino-acid biosynthesis; L-histidine biosynthesis; L-histidine from 5-phospho-alpha-D-ribose 1-diphosphate: step 4/9. This is 1-(5-phosphoribosyl)-5-[(5-phosphoribosylamino)methylideneamino] imidazole-4-carboxamide isomerase from Bacillus cereus (strain AH187).